The chain runs to 459 residues: UDP-N-acetylmuramate--L-alanine ligase (459 aa).

Residue 113 to 119 (GSHGKTS) participates in ATP binding.

It belongs to the MurCDEF family.

It localises to the cytoplasm. It catalyses the reaction UDP-N-acetyl-alpha-D-muramate + L-alanine + ATP = UDP-N-acetyl-alpha-D-muramoyl-L-alanine + ADP + phosphate + H(+). It functions in the pathway cell wall biogenesis; peptidoglycan biosynthesis. Cell wall formation. This is UDP-N-acetylmuramate--L-alanine ligase from Desulfotalea psychrophila (strain LSv54 / DSM 12343).